Here is a 431-residue protein sequence, read N- to C-terminus: MSFLVSKPERIRRWVSEKFIVEGLRDLELFGEQPPGDTRRKANEASSESIASFSKPEMMSSFLPEGGCYELLTIIGKGFEDLMTVNLARYKPTGEYVTVRRINLEACSNEMVTFLQGELHVSKLFSHPNIVPYRATFIADNELWVVTSFMAYGSAKDLIGTHFMDGMNELAIAYILQGVLKALDYIHHMGYVHRSVKASHILISTDGKVYLSGLRSNLSMISHGQRQRAVHDFPKYSIKVLPWLSPEVLQQNLQGYDAKSDIYSVGITACELANGHVPFKDMPATQMLLEKLNGTVPCLLDTSTIPAEELTMSPSRSIANPGLNDSLAAGSLRPSNGDSPSHPYHRTFSPHFHNFVEQCLQRNPDARPNASTLLNHSFFKQIKRRASEALPELLRPVTPITNFEGSQSQDHSGIFGLVTNLEDLEVDDWEF.

2 positions are modified to phosphoserine: Ser2 and Ser46. Disordered regions lie at residues 32–52 and 314–344; these read EQPP…SIAS and PSRS…SHPY. One can recognise a Protein kinase domain in the interval 69–379; sequence YELLTIIGKG…ASTLLNHSFF (311 aa). Residue Thr419 is modified to Phosphothreonine; by LKB1.

This sequence belongs to the protein kinase superfamily. STE Ser/Thr protein kinase family. STE20 subfamily. In terms of assembly, component of a trimeric complex composed of STK11/LKB1, STRAD (STRADA or STRADB) and CAB39/MO25 (CAB39/MO25alpha or CAB39L/MO25beta): the complex tethers STK11/LKB1 in the cytoplasm and stimulates its catalytic activity.

It is found in the nucleus. The protein resides in the cytoplasm. Pseudokinase which, in complex with CAB39/MO25 (CAB39/MO25alpha or CAB39L/MO25beta), binds to and activates STK11/LKB1. Adopts a closed conformation typical of active protein kinases and binds STK11/LKB1 as a pseudosubstrate, promoting conformational change of STK11/LKB1 in an active conformation. The protein is STE20-related kinase adapter protein alpha (Strada) of Mus musculus (Mouse).